We begin with the raw amino-acid sequence, 876 residues long: Alanine--tRNA ligase (876 aa).

Residues H564, H568, C666, and H670 each coordinate Zn(2+).

The protein belongs to the class-II aminoacyl-tRNA synthetase family. Homotetramer. The cofactor is Zn(2+).

Its subcellular location is the cytoplasm. The enzyme catalyses tRNA(Ala) + L-alanine + ATP = L-alanyl-tRNA(Ala) + AMP + diphosphate. Its function is as follows. Catalyzes the attachment of alanine to tRNA(Ala) in a two-step reaction: alanine is first activated by ATP to form Ala-AMP and then transferred to the acceptor end of tRNA(Ala). Also edits incorrectly charged Ser-tRNA(Ala) and Gly-tRNA(Ala) via its editing domain. This is Alanine--tRNA ligase from Salmonella paratyphi B (strain ATCC BAA-1250 / SPB7).